Consider the following 399-residue polypeptide: Elongation factor Tu (399 aa).

Positions 10-209 constitute a tr-type G domain; the sequence is KPHVNIGTIG…AVDEYIPTPE (200 aa). Residues 19-26 form a G1 region; that stretch reads GHVDHGKT. 19–26 is a GTP binding site; the sequence is GHVDHGKT. Thr-26 is a binding site for Mg(2+). The G2 stretch occupies residues 60–64; that stretch reads GITIA. The interval 81–84 is G3; the sequence is DCPG. Residues 81 to 85 and 136 to 139 each bind GTP; these read DCPGH and NKED. Residues 136 to 139 form a G4 region; that stretch reads NKED. A G5 region spans residues 174–176; sequence SAL.

This sequence belongs to the TRAFAC class translation factor GTPase superfamily. Classic translation factor GTPase family. EF-Tu/EF-1A subfamily. Monomer.

The protein localises to the cytoplasm. The catalysed reaction is GTP + H2O = GDP + phosphate + H(+). GTP hydrolase that promotes the GTP-dependent binding of aminoacyl-tRNA to the A-site of ribosomes during protein biosynthesis. This Nitratiruptor sp. (strain SB155-2) protein is Elongation factor Tu.